Here is a 379-residue protein sequence, read N- to C-terminus: Chaperone protein DnaJ (379 aa).

Residues 6–71 form the J domain; it reads DYYEVLGVDK…QKRSRYDQFG (66 aa). A CR-type zinc finger spans residues 138–220; the sequence is GVEREINVSK…CNGKGRLRST (83 aa). Zn(2+) is bound by residues cysteine 151, cysteine 154, cysteine 168, cysteine 171, cysteine 194, cysteine 197, cysteine 208, and cysteine 211. CXXCXGXG motif repeat units follow at residues 151-158, 168-175, 194-201, and 208-215; these read CSKCTGSG, CNHCNGTG, CDACKGEG, and CPACNGKG.

The protein belongs to the DnaJ family. In terms of assembly, homodimer. It depends on Zn(2+) as a cofactor.

The protein resides in the cytoplasm. In terms of biological role, participates actively in the response to hyperosmotic and heat shock by preventing the aggregation of stress-denatured proteins and by disaggregating proteins, also in an autonomous, DnaK-independent fashion. Unfolded proteins bind initially to DnaJ; upon interaction with the DnaJ-bound protein, DnaK hydrolyzes its bound ATP, resulting in the formation of a stable complex. GrpE releases ADP from DnaK; ATP binding to DnaK triggers the release of the substrate protein, thus completing the reaction cycle. Several rounds of ATP-dependent interactions between DnaJ, DnaK and GrpE are required for fully efficient folding. Also involved, together with DnaK and GrpE, in the DNA replication of plasmids through activation of initiation proteins. This chain is Chaperone protein DnaJ, found in Ruminiclostridium cellulolyticum (strain ATCC 35319 / DSM 5812 / JCM 6584 / H10) (Clostridium cellulolyticum).